The primary structure comprises 342 residues: Dihydroorotase (342 aa).

Residues His-13 and His-15 each coordinate Zn(2+). Substrate is bound by residues His-15 to Arg-17 and Asn-41. Residues Lys-98, His-135, and His-173 each coordinate Zn(2+). At Lys-98 the chain carries N6-carboxylysine. Position 135 (His-135) interacts with substrate. Residue Leu-218 participates in substrate binding. Zn(2+) is bound at residue Asp-246. Asp-246 is an active-site residue. Substrate is bound by residues His-250 and Ala-262.

The protein belongs to the metallo-dependent hydrolases superfamily. DHOase family. Class II DHOase subfamily. Homodimer. Requires Zn(2+) as cofactor.

The enzyme catalyses (S)-dihydroorotate + H2O = N-carbamoyl-L-aspartate + H(+). Its pathway is pyrimidine metabolism; UMP biosynthesis via de novo pathway; (S)-dihydroorotate from bicarbonate: step 3/3. Its function is as follows. Catalyzes the reversible cyclization of carbamoyl aspartate to dihydroorotate. The chain is Dihydroorotase from Aliivibrio fischeri (strain ATCC 700601 / ES114) (Vibrio fischeri).